We begin with the raw amino-acid sequence, 390 residues long: Lipoyl synthase, mitochondrial (390 aa).

The transit peptide at 1 to 18 (MALYRAPKLQRSLLNRCL) directs the protein to the mitochondrion. Cysteine 99, cysteine 104, cysteine 110, cysteine 137, cysteine 141, cysteine 144, and serine 351 together coordinate [4Fe-4S] cluster. Residues 120–340 (AEGRSAATAT…KQVAEDLGFL (221 aa)) form the Radical SAM core domain.

Belongs to the radical SAM superfamily. Lipoyl synthase family. Requires [4Fe-4S] cluster as cofactor.

The protein resides in the mitochondrion. The catalysed reaction is [[Fe-S] cluster scaffold protein carrying a second [4Fe-4S](2+) cluster] + N(6)-octanoyl-L-lysyl-[protein] + 2 oxidized [2Fe-2S]-[ferredoxin] + 2 S-adenosyl-L-methionine + 4 H(+) = [[Fe-S] cluster scaffold protein] + N(6)-[(R)-dihydrolipoyl]-L-lysyl-[protein] + 4 Fe(3+) + 2 hydrogen sulfide + 2 5'-deoxyadenosine + 2 L-methionine + 2 reduced [2Fe-2S]-[ferredoxin]. It functions in the pathway protein modification; protein lipoylation via endogenous pathway; protein N(6)-(lipoyl)lysine from octanoyl-[acyl-carrier-protein]: step 2/2. Functionally, catalyzes the radical-mediated insertion of two sulfur atoms into the C-6 and C-8 positions of the octanoyl moiety bound to the lipoyl domains of lipoate-dependent enzymes, thereby converting the octanoylated domains into lipoylated derivatives. The chain is Lipoyl synthase, mitochondrial from Coprinopsis cinerea (strain Okayama-7 / 130 / ATCC MYA-4618 / FGSC 9003) (Inky cap fungus).